The sequence spans 457 residues: G-protein coupled receptor 135 (457 aa).

The segment at 1 to 27 (MEEQARPPSRPAASATLPGSAHPGGAA) is disordered. Topologically, residues 1–64 (MEEQARPPSR…EAAGSRGPAP (64 aa)) are extracellular. Asparagine 47 carries N-linked (GlcNAc...) asparagine glycosylation. Residues 65–85 (LLWHGAAVAAQALVLLLIFLL) form a helical membrane-spanning segment. The Cytoplasmic segment spans residues 86 to 109 (SSLGNCAVMGVIVKHRQLRTVTNA). Residues 110–130 (FILSLSLSDLLTALLCLPAAF) form a helical membrane-spanning segment. The Extracellular portion of the chain corresponds to 131 to 156 (LDLFAPPGDSGPWRSFCAASRFFSSC). Residues 157 to 177 (FGIVSTFSVALISLDRYCAIV) form a helical membrane-spanning segment. Topologically, residues 178–189 (RPPRDKLGRRRA) are cytoplasmic. Residues 190-210 (LQLLAGAWLAALGFSLPWELL) form a helical membrane-spanning segment. Residues 211 to 235 (RAPREPPTPQSFHRCLYRTSPDPAQ) are Extracellular-facing. The chain crosses the membrane as a helical span at residues 236-256 (LGAAYSVGLVVACYLLPFLLM). The Cytoplasmic segment spans residues 257 to 295 (CFCRYHICKTVRLSDVRVRPMTTYARVLRFFSEVRTATT). The chain crosses the membrane as a helical span at residues 296–316 (VLIMIVFVICCWGPYCFLVLL). Residues 317–329 (AATRQGQTTQAPS) lie on the Extracellular side of the membrane. Residues 330–350 (LLNVAAVWLTWANGAINPVIY) form a helical membrane-spanning segment. At 351–457 (AIRNPNISMF…HKSETRDSSI (107 aa)) the chain is on the cytoplasmic side.

The protein belongs to the G-protein coupled receptor 1 family. As to quaternary structure, interacts with MTNR1B. Interacts with ARRB1 and ARRB2 in a spontaneous and agonist-independent manner; leading to the internalization of GPR135 in the endosomal compartment.

The protein resides in the cell membrane. The protein localises to the endosome membrane. Functionally, orphan receptor. Has spontaneous activity for beta-arrestin recruitment. Shows a reciprocal regulatory interaction with the melatonin receptor MTNR1B most likely through receptor heteromerization. The protein is G-protein coupled receptor 135 (Gpr135) of Rattus norvegicus (Rat).